We begin with the raw amino-acid sequence, 445 residues long: Asparagine--tRNA ligase (445 aa).

The protein belongs to the class-II aminoacyl-tRNA synthetase family. Homodimer.

It localises to the cytoplasm. It catalyses the reaction tRNA(Asn) + L-asparagine + ATP = L-asparaginyl-tRNA(Asn) + AMP + diphosphate + H(+). The chain is Asparagine--tRNA ligase from Deinococcus deserti (strain DSM 17065 / CIP 109153 / LMG 22923 / VCD115).